We begin with the raw amino-acid sequence, 690 residues long: Protein-glucosylgalactosylhydroxylysine glucosidase (690 aa).

299–300 (WD) is a substrate binding site. Glu429 serves as the catalytic Proton donor. Residue 497–498 (KQ) participates in substrate binding.

The protein belongs to the glycosyl hydrolase 65 family.

It catalyses the reaction (5R)-5-O-[alpha-D-glucosyl-(1-&gt;2)-beta-D-galactosyl]-5-hydroxy-L-lysyl-[collagen] + H2O = (5R)-5-O-(beta-D-galactosyl)-5-hydroxy-L-lysyl-[collagen] + D-glucose. In terms of biological role, catalyzes the hydrolysis of glucose from the disaccharide unit linked to hydroxylysine residues of collagen and collagen-like proteins. This chain is Protein-glucosylgalactosylhydroxylysine glucosidase, found in Mus musculus (Mouse).